Reading from the N-terminus, the 1140-residue chain is Chromosome partition protein Smc (1140 aa).

34–41 serves as a coordination point for ATP; that stretch reads PNGSGKSN. A coiled-coil region spans residues 160–484; it reads VDQFDSEIER…EKEASAKIAS (325 aa). An SMC hinge domain is found at 502–619; that stretch reads EGVIGLVRDL…VQDIDAGRRL (118 aa). Residues 660–990 adopt a coiled-coil conformation; sequence LEGMKIQLSS…MLNEKKREVF (331 aa).

Belongs to the SMC family. As to quaternary structure, homodimer.

Its subcellular location is the cytoplasm. Its function is as follows. Required for chromosome condensation and partitioning. This is Chromosome partition protein Smc from Thermoplasma acidophilum (strain ATCC 25905 / DSM 1728 / JCM 9062 / NBRC 15155 / AMRC-C165).